We begin with the raw amino-acid sequence, 193 residues long: Xanthine phosphoribosyltransferase (193 aa).

2 residues coordinate xanthine: Leu20 and Asn27. Ala128–Ala132 provides a ligand contact to 5-phospho-alpha-D-ribose 1-diphosphate. Residue Lys156 participates in xanthine binding.

It belongs to the purine/pyrimidine phosphoribosyltransferase family. Xpt subfamily. In terms of assembly, homodimer.

The protein resides in the cytoplasm. It carries out the reaction XMP + diphosphate = xanthine + 5-phospho-alpha-D-ribose 1-diphosphate. The protein operates within purine metabolism; XMP biosynthesis via salvage pathway; XMP from xanthine: step 1/1. Converts the preformed base xanthine, a product of nucleic acid breakdown, to xanthosine 5'-monophosphate (XMP), so it can be reused for RNA or DNA synthesis. The protein is Xanthine phosphoribosyltransferase of Staphylococcus saprophyticus subsp. saprophyticus (strain ATCC 15305 / DSM 20229 / NCIMB 8711 / NCTC 7292 / S-41).